Reading from the N-terminus, the 212-residue chain is Large ribosomal subunit protein uL3 (212 aa).

The residue at position 153 (Q153) is an N5-methylglutamine.

The protein belongs to the universal ribosomal protein uL3 family. In terms of assembly, part of the 50S ribosomal subunit. Forms a cluster with proteins L14 and L19. Post-translationally, methylated by PrmB.

In terms of biological role, one of the primary rRNA binding proteins, it binds directly near the 3'-end of the 23S rRNA, where it nucleates assembly of the 50S subunit. The polypeptide is Large ribosomal subunit protein uL3 (Marinobacter nauticus (strain ATCC 700491 / DSM 11845 / VT8) (Marinobacter aquaeolei)).